The primary structure comprises 419 residues: L-rhamnose isomerase (419 aa).

His262, Asp294, and Asp296 together coordinate Mn(2+).

This sequence belongs to the rhamnose isomerase family. Homotetramer. Mn(2+) serves as cofactor.

Its subcellular location is the cytoplasm. It catalyses the reaction L-rhamnopyranose = L-rhamnulose. The protein operates within carbohydrate degradation; L-rhamnose degradation; glycerone phosphate from L-rhamnose: step 1/3. Functionally, catalyzes the interconversion of L-rhamnose and L-rhamnulose. In Escherichia coli (strain 55989 / EAEC), this protein is L-rhamnose isomerase.